Reading from the N-terminus, the 411-residue chain is Histone-lysine N-methyltransferase SUV39H1-A (411 aa).

Residues 43-101 (YEVEYLCNYKKHKGREFFLVKWKGYEESENTWEPLKNLKCPILLHQFRKDMKAALLQAN) enclose the Chromo domain. Positions 178–239 (VGCECEDCVS…DCANRVVQRG (62 aa)) constitute a Pre-SET domain. Cys-180, Cys-182, Cys-185, Cys-193, Cys-194, Cys-221, Cys-225, Cys-227, and Cys-231 together coordinate Zn(2+). The SET domain occupies 242–365 (YDLCIFKTDN…AGEELTFDYK (124 aa)). Residues 253–255 (RGW), Tyr-296, and 322–323 (NH) each bind S-adenosyl-L-methionine. Residues Cys-325, Cys-399, Cys-401, and Cys-406 each coordinate Zn(2+). Residues 395–411 (VHMECKCGVRNCRKYLF) enclose the Post-SET domain.

Belongs to the class V-like SAM-binding methyltransferase superfamily. Histone-lysine methyltransferase family. Suvar3-9 subfamily. In terms of tissue distribution, expressed ubuitiously.

The protein localises to the nucleus. It localises to the chromosome. It is found in the centromere. The enzyme catalyses N(6)-methyl-L-lysyl(9)-[histone H3] + S-adenosyl-L-methionine = N(6),N(6)-dimethyl-L-lysyl(9)-[histone H3] + S-adenosyl-L-homocysteine + H(+). It catalyses the reaction N(6),N(6)-dimethyl-L-lysyl(9)-[histone H3] + S-adenosyl-L-methionine = N(6),N(6),N(6)-trimethyl-L-lysyl(9)-[histone H3] + S-adenosyl-L-homocysteine + H(+). Histone methyltransferase that specifically trimethylates 'Lys-9' of histone H3 using monomethylated H3 'Lys-9' as substrate. H3 'Lys-9' trimethylation represents a specific tag for epigenetic transcriptional repression by recruiting HP1 (CBX1, CBX3 and/or CBX5) proteins to methylated histones. Mainly functions in heterochromatin regions, thereby playing a central role in the establishment of constitutive heterochromatin at pericentric and telomere regions. H3 'Lys-9' trimethylation is also required to direct DNA methylation at pericentric repeats. SUV39H1 is targeted to histone H3 via its interaction with RB1 and is involved in many processes, such as regulation of organ-specific terminal differentiation during development. This is Histone-lysine N-methyltransferase SUV39H1-A (suv39h1a) from Danio rerio (Zebrafish).